A 59-amino-acid polypeptide reads, in one-letter code: MAHKFLIKKNKAGEFVAYFVYNSETIFWTEGYASKASAKNAIESIKKNGPEAEIDDQTD.

It belongs to the UPF0339 family.

In Caulobacter vibrioides (strain ATCC 19089 / CIP 103742 / CB 15) (Caulobacter crescentus), this protein is UPF0339 protein CC_2965.